Reading from the N-terminus, the 1226-residue chain is DNA-directed RNA polymerase subunit beta (1226 aa).

The protein belongs to the RNA polymerase beta chain family. The RNAP catalytic core consists of 2 alpha, 1 beta, 1 beta' and 1 omega subunit. When a sigma factor is associated with the core the holoenzyme is formed, which can initiate transcription.

The catalysed reaction is RNA(n) + a ribonucleoside 5'-triphosphate = RNA(n+1) + diphosphate. In terms of biological role, DNA-dependent RNA polymerase catalyzes the transcription of DNA into RNA using the four ribonucleoside triphosphates as substrates. The chain is DNA-directed RNA polymerase subunit beta from Leptospira interrogans serogroup Icterohaemorrhagiae serovar copenhageni (strain Fiocruz L1-130).